We begin with the raw amino-acid sequence, 284 residues long: Nucleotide-binding protein PputGB1_0956 (284 aa).

8–15 provides a ligand contact to ATP; the sequence is GRSGSGKS. 60–63 contributes to the GTP binding site; it reads DARN.

It belongs to the RapZ-like family.

Displays ATPase and GTPase activities. This is Nucleotide-binding protein PputGB1_0956 from Pseudomonas putida (strain GB-1).